The chain runs to 308 residues: 1,4-dihydroxy-2-naphthoate octaprenyltransferase (308 aa).

9 helical membrane-spanning segments follow: residues 22 to 42 (TLPL…WANP), 47 to 67 (GLVM…SNFA), 101 to 121 (WGLI…IGIA), 129 to 149 (FAFA…TVGV), 153 to 173 (GYMG…GVGG), 186 to 206 (IILP…INNL), 235 to 255 (ILLS…AISW), 256 to 276 (TNYL…FVYC), and 286 to 306 (ILAQ…LGLL).

The protein belongs to the MenA family. Type 1 subfamily.

Its subcellular location is the cell inner membrane. It carries out the reaction an all-trans-polyprenyl diphosphate + 1,4-dihydroxy-2-naphthoate + H(+) = a 2-demethylmenaquinol + CO2 + diphosphate. The protein operates within quinol/quinone metabolism; menaquinone biosynthesis; menaquinol from 1,4-dihydroxy-2-naphthoate: step 1/2. Its function is as follows. Conversion of 1,4-dihydroxy-2-naphthoate (DHNA) to demethylmenaquinone (DMK). This chain is 1,4-dihydroxy-2-naphthoate octaprenyltransferase, found in Haemophilus influenzae (strain ATCC 51907 / DSM 11121 / KW20 / Rd).